The sequence spans 548 residues: Viridiflorene synthase (548 aa).

Residues Asp-301, Asp-305, Asp-444, Thr-448, and Glu-452 each contribute to the Mg(2+) site. A DDXXD motif motif is present at residues 301-305 (DDTFD).

Belongs to the terpene synthase family. Tpsa subfamily. The cofactor is Mg(2+). Expressed in stem and leaf trichomes. Detected in roots, fruits and flowers.

It localises to the cytoplasm. The enzyme catalyses (2E,6E)-farnesyl diphosphate = viridiflorene + diphosphate. The protein operates within secondary metabolite biosynthesis; terpenoid biosynthesis. Functionally, sesquiterpene synthase involved in the production of viridiflorene from (E,E)-farnesyl diphosphate. Can also use (Z,Z)-FPP to make several unidentified sesquiterpenes. The sequence is that of Viridiflorene synthase from Solanum lycopersicum (Tomato).